Reading from the N-terminus, the 425-residue chain is UDP-N-acetylglucosamine 1-carboxyvinyltransferase (425 aa).

Residue 23–24 coordinates phosphoenolpyruvate; sequence KN. Arg100 contacts UDP-N-acetyl-alpha-D-glucosamine. The active-site Proton donor is Cys124. Cys124 carries the post-translational modification 2-(S-cysteinyl)pyruvic acid O-phosphothioketal. UDP-N-acetyl-alpha-D-glucosamine-binding positions include 169 to 172, Asp313, and Val335; that span reads KVSV.

The protein belongs to the EPSP synthase family. MurA subfamily.

The protein resides in the cytoplasm. It catalyses the reaction phosphoenolpyruvate + UDP-N-acetyl-alpha-D-glucosamine = UDP-N-acetyl-3-O-(1-carboxyvinyl)-alpha-D-glucosamine + phosphate. It participates in cell wall biogenesis; peptidoglycan biosynthesis. Cell wall formation. Adds enolpyruvyl to UDP-N-acetylglucosamine. The polypeptide is UDP-N-acetylglucosamine 1-carboxyvinyltransferase (Wolbachia pipientis subsp. Culex pipiens (strain wPip)).